The sequence spans 856 residues: Lon protease homolog 2, peroxisomal (856 aa).

Residues 13–222 (LPLLLTHEGV…VTIPLLLRQI (210 aa)) form the Lon N-terminal domain. Residue 379-386 (GPPGVGKT) coordinates ATP. Basic and acidic residues predominate over residues 586–608 (GQHREHKSEHLEAPEGEERKESV). The tract at residues 586 to 614 (GQHREHKSEHLEAPEGEERKESVPEGSKS) is disordered. Positions 655–841 (LNQPGVAIGL…DEVLNAAFDG (187 aa)) constitute a Lon proteolytic domain. Catalysis depends on residues Ser747 and Lys790. The short motif at 854-856 (SKL) is the Microbody targeting signal element.

Belongs to the peptidase S16 family.

The protein resides in the peroxisome matrix. It catalyses the reaction Hydrolysis of proteins in presence of ATP.. Its function is as follows. ATP-dependent serine protease that mediates the selective degradation of misfolded and unassembled polypeptides in the peroxisomal matrix. Necessary for type 2 peroxisome targeting signal (PTS2)-containing protein processing and facilitates peroxisome matrix protein import. The chain is Lon protease homolog 2, peroxisomal (lonp2) from Xenopus laevis (African clawed frog).